We begin with the raw amino-acid sequence, 355 residues long: Epoxyqueuosine reductase (355 aa).

Asp-143 (proton donor) is an active-site residue. A 4Fe-4S ferredoxin-type domain is found at 185–217; the sequence is LPLPIDTPATAHCGTCTRCIDICPTQAIIAPHR. [4Fe-4S] cluster contacts are provided by Cys-197, Cys-200, Cys-203, Cys-207, Cys-223, Cys-250, Cys-253, and Cys-257.

The protein belongs to the QueG family. In terms of assembly, monomer. It depends on cob(II)alamin as a cofactor. Requires [4Fe-4S] cluster as cofactor.

The protein localises to the cytoplasm. It catalyses the reaction epoxyqueuosine(34) in tRNA + AH2 = queuosine(34) in tRNA + A + H2O. The protein operates within tRNA modification; tRNA-queuosine biosynthesis. In terms of biological role, catalyzes the conversion of epoxyqueuosine (oQ) to queuosine (Q), which is a hypermodified base found in the wobble positions of tRNA(Asp), tRNA(Asn), tRNA(His) and tRNA(Tyr). The chain is Epoxyqueuosine reductase from Xanthomonas campestris pv. campestris (strain ATCC 33913 / DSM 3586 / NCPPB 528 / LMG 568 / P 25).